A 445-amino-acid polypeptide reads, in one-letter code: Phosphoglucosamine mutase (445 aa).

The Phosphoserine intermediate role is filled by S99. Residues S99, D242, D244, and D246 each coordinate Mg(2+). Position 99 is a phosphoserine (S99).

This sequence belongs to the phosphohexose mutase family. Mg(2+) is required as a cofactor. Activated by phosphorylation.

It carries out the reaction alpha-D-glucosamine 1-phosphate = D-glucosamine 6-phosphate. In terms of biological role, catalyzes the conversion of glucosamine-6-phosphate to glucosamine-1-phosphate. In Campylobacter jejuni subsp. jejuni serotype O:23/36 (strain 81-176), this protein is Phosphoglucosamine mutase.